A 543-amino-acid chain; its full sequence is Secreted effector protein SptP (543 aa).

A chaperone-binding region spans residues 35 to 139 (TDKAYVAPEK…FINLIKNKDN (105 aa)). The Bacterial Rho-GAP domain maps to 162 to 293 (DVGAESKQPL…TAELEKIKAG (132 aa)). A Tyrosine-protein phosphatase domain is found at 315–543 (IPINQQTQVK…QAQLLMTTAS (229 aa)). C481 acts as the Phosphocysteine intermediate in catalysis.

Forms a complex with SicP.

The protein localises to the secreted. It is found in the host cytoplasm. It catalyses the reaction O-phospho-L-tyrosyl-[protein] + H2O = L-tyrosyl-[protein] + phosphate. Effector proteins function to alter host cell physiology and promote bacterial survival in host tissues. This protein includes tyrosine phosphatase and GTPase activating protein (GAP) activities. After bacterial internalization, GAP mediates the reversal of the cytoskeletal changes induced by SopE. This function is independent of its tyrosine phosphatase activity, which remains unclear. The chain is Secreted effector protein SptP (sptP) from Salmonella typhi.